The sequence spans 545 residues: Monocarboxylate transporter 8 (545 aa).

Positions 1 to 98 are disordered; it reads MALPSPASEE…VETRGTARGF (98 aa). Ala2 bears the N-acetylalanine mark. The Cytoplasmic segment spans residues 2–102; sequence ALPSPASEEA…GTARGFQPPE (101 aa). Repeat copies occupy residues 29 to 50 and 51 to 72. The tract at residues 29–72 is 2 X 22 AA approximate tandem repeats; that stretch reads PVPEPEPEPEPEPEPDPEPVPVPPPEPQPEPEPQPLPDPAPLPE. The segment covering 33-45 has biased composition (acidic residues); that stretch reads PEPEPEPEPEPDP. A compositionally biased stretch (pro residues) spans 46–70; it reads EPVPVPPPEPQPEPEPQPLPDPAPL. A helical membrane pass occupies residues 103-123; sequence GGFGWIVVFAATWCNGSIFGI. Residues 124–149 lie on the Extracellular side of the membrane; it reads HNSVGILYSMLLEEEKEKNRQVEFQA. Residues 150–170 form a helical membrane-spanning segment; that stretch reads AWVGALAMGMIFFCSPIVSIF. Residues 171–177 are Cytoplasmic-facing; the sequence is TDRLGCR. The helical transmembrane segment at 178–198 threads the bilayer; sequence ITATTGAAVAFIGLHTSSFTS. The Extracellular segment spans residues 199 to 206; sequence SLSLRYFT. Residues 207 to 227 traverse the membrane as a helical segment; sequence YGILFGCGCSFAFQPSLVILG. At 228-235 the chain is on the cytoplasmic side; sequence HYFQRRLG. Residues 236–256 traverse the membrane as a helical segment; it reads LANGVVSAGSSIFSMSFPFLI. The Extracellular portion of the chain corresponds to 257–264; sequence KMLGDKIK. A helical membrane pass occupies residues 265–285; it reads LAQTFQVLSTFMFVLTLLSLT. Topologically, residues 286–328 are cytoplasmic; sequence YRPLLPSSQDTPSKRGAHTLRQRFLVQFRKYFNMRVFRQRTYR. The chain crosses the membrane as a helical span at residues 329-349; it reads IWAFGIAAAALGYFVPYVHLM. Residues 350–362 lie on the Extracellular side of the membrane; the sequence is KYVEDKFKEIKET. A helical transmembrane segment spans residues 363 to 383; the sequence is WVLLVCIGATSGLGRLVSGHI. The Cytoplasmic portion of the chain corresponds to 384–392; that stretch reads SDSIPGLKK. The helical transmembrane segment at 393-413 threads the bilayer; the sequence is IYLQVLSFLLLGLMSMMIPLC. Residues 414-415 are Extracellular-facing; it reads RD. The helical transmembrane segment at 416–436 threads the bilayer; it reads FGGLIVVCLFLGLCDGFFITI. The Cytoplasmic segment spans residues 437–453; the sequence is MAPIAFELVGPMQASQA. A helical membrane pass occupies residues 454-474; that stretch reads IGYLLGMMALPMIAGPPIAGL. Over 475–483 the chain is Extracellular; sequence LRNCFGDYH. The chain crosses the membrane as a helical span at residues 484 to 504; that stretch reads VAFYFAGVPPIIGAVILFFVP. Topologically, residues 505–545 are cytoplasmic; it reads LMHQRMFKKEQRDSSKDKMLSHDPDPNGELLPGSPTPEEPI. The segment covering 514-529 has biased composition (basic and acidic residues); that stretch reads EQRDSSKDKMLSHDPD. The interval 514 to 545 is disordered; sequence EQRDSSKDKMLSHDPDPNGELLPGSPTPEEPI. Thr540 is subject to Phosphothreonine.

This sequence belongs to the major facilitator superfamily. Monocarboxylate porter (TC 2.A.1.13) family. In terms of assembly, monomer. Homodimer. Homooligomer. As to expression, expressed in cerebral microvessels.

It localises to the cell membrane. The protein localises to the apical cell membrane. It catalyses the reaction 3,3',5-triiodo-L-thyronine(out) = 3,3',5-triiodo-L-thyronine(in). It carries out the reaction 3,3',5'-triiodo-L-thyronine(out) = 3,3',5'-triiodo-L-thyronine(in). The enzyme catalyses L-thyroxine(out) = L-thyroxine(in). The catalysed reaction is 3,3'-diiodo-L-thyronine(out) = 3,3'-diiodo-L-thyronine(in). Specific thyroid hormone transmembrane transporter, that mediates both uptake and efflux of thyroid hormones across the cell membrane independently of pH or a Na(+) gradient. Major substrates are the iodothyronines T3 and T4 and to a lesser extent rT3 and 3,3-diiodothyronine (3,3'-T2). Acts as an important mediator of thyroid hormone transport, especially T3, through the blood-brain barrier. This chain is Monocarboxylate transporter 8 (Slc16a2), found in Mus musculus (Mouse).